Reading from the N-terminus, the 190-residue chain is GTP cyclohydrolase 1 (190 aa).

Zn(2+) is bound by residues cysteine 75, histidine 78, and cysteine 146.

This sequence belongs to the GTP cyclohydrolase I family. Homomer.

It carries out the reaction GTP + H2O = 7,8-dihydroneopterin 3'-triphosphate + formate + H(+). Its pathway is cofactor biosynthesis; 7,8-dihydroneopterin triphosphate biosynthesis; 7,8-dihydroneopterin triphosphate from GTP: step 1/1. The protein is GTP cyclohydrolase 1 of Campylobacter lari (strain RM2100 / D67 / ATCC BAA-1060).